Here is a 214-residue protein sequence, read N- to C-terminus: Shikimate kinase (214 aa).

Position 35–40 (glycine 35–threonine 40) interacts with ATP. Serine 39 serves as a coordination point for Mg(2+). The substrate site is built by aspartate 57, arginine 81, and glycine 103. Arginine 141 lines the ATP pocket. A substrate-binding site is contributed by arginine 160.

This sequence belongs to the shikimate kinase family. Monomer. Mg(2+) is required as a cofactor.

The protein resides in the cytoplasm. The enzyme catalyses shikimate + ATP = 3-phosphoshikimate + ADP + H(+). It participates in metabolic intermediate biosynthesis; chorismate biosynthesis; chorismate from D-erythrose 4-phosphate and phosphoenolpyruvate: step 5/7. Its function is as follows. Catalyzes the specific phosphorylation of the 3-hydroxyl group of shikimic acid using ATP as a cosubstrate. This chain is Shikimate kinase, found in Nitrobacter winogradskyi (strain ATCC 25391 / DSM 10237 / CIP 104748 / NCIMB 11846 / Nb-255).